Here is a 589-residue protein sequence, read N- to C-terminus: Phenylalanine--tRNA ligase beta subunit (589 aa).

Residues L290–H368 form the B5 domain. 4 residues coordinate Mg(2+): D346, D352, E355, and D356.

This sequence belongs to the phenylalanyl-tRNA synthetase beta subunit family. Type 2 subfamily. Tetramer of two alpha and two beta subunits. Mg(2+) serves as cofactor.

Its subcellular location is the cytoplasm. It is found in the nucleus. The catalysed reaction is tRNA(Phe) + L-phenylalanine + ATP = L-phenylalanyl-tRNA(Phe) + AMP + diphosphate + H(+). The sequence is that of Phenylalanine--tRNA ligase beta subunit (frs1) from Schizosaccharomyces pombe (strain 972 / ATCC 24843) (Fission yeast).